The sequence spans 485 residues: Envelope glycoprotein C (485 aa).

Residues 1 to 32 (MGLVNIMRFITFAYIICGGFILTRTSGTSASA) form the signal peptide. Positions 28-72 (TSASASPATPTTNTGEGTSSPVTPTYTTSTDSNNSTATNNSTDVN) are enriched in low complexity. Residues 28–88 (TSASASPATP…TPSHPHSHEN (61 aa)) form a disordered region. Over 33–444 (SPATPTTNTG…DASPIVEDMP (412 aa)) the chain is Virion surface. Residues Asn60, Asn61, Asn66, Asn67, Asn72, Asn108, Asn116, Asn147, Asn220, Asn225, and Asn286 are each glycosylated (N-linked (GlcNAc...) asparagine; by host). The cysteines at positions 92 and 109 are disulfide-linked. In terms of domain architecture, Ig-like spans 237 to 330 (PLMDLSVHPS…EWYRDEVSFS (94 aa)). 3 disulfide bridges follow: Cys256–Cys318, Cys357–Cys416, and Cys361–Cys390. Residues 445 to 468 (VLTGIIAVTCGAAALALVVLITAV) traverse the membrane as a helical segment. Residues 469 to 485 (CFYCSKPSQVPYKKADF) lie on the Cytoplasmic side of the membrane.

This sequence belongs to the herpesviridae glycoprotein C family. Interacts with host complement component C3; this interaction inhibits host immune response by disregulating complement cascade.

It is found in the virion membrane. In terms of biological role, essential for the initial attachment to heparan sulfate moieties of the host cell surface proteoglycans. Also plays a role in host immune evasion by inhibiting the host complement cascade activation. The chain is Envelope glycoprotein C (gC) from Equine herpesvirus 4 (strain 1942) (EHV-4).